Consider the following 41-residue polypeptide: Large ribosomal subunit protein bL36 (41 aa).

It belongs to the bacterial ribosomal protein bL36 family.

This Nitrobacter hamburgensis (strain DSM 10229 / NCIMB 13809 / X14) protein is Large ribosomal subunit protein bL36.